A 21-amino-acid chain; its full sequence is thr operon leader peptide (21 aa).

This sequence belongs to the thr operon leader peptide family.

Functionally, this protein is involved in control of the biosynthesis of threonine. This Salmonella choleraesuis (strain SC-B67) protein is thr operon leader peptide.